The chain runs to 388 residues: Ribonuclease D (388 aa).

The 3'-5' exonuclease domain occupies Q24 to K191. Residues T230–E310 form the HRDC domain.

It belongs to the RNase D family. Requires a divalent metal cation as cofactor.

Its subcellular location is the cytoplasm. It carries out the reaction Exonucleolytic cleavage that removes extra residues from the 3'-terminus of tRNA to produce 5'-mononucleotides.. Its function is as follows. Exonuclease involved in the 3' processing of various precursor tRNAs. Initiates hydrolysis at the 3'-terminus of an RNA molecule and releases 5'-mononucleotides. The sequence is that of Ribonuclease D from Shewanella sp. (strain ANA-3).